Reading from the N-terminus, the 607-residue chain is Transporter aclS (607 aa).

12 helical membrane-spanning segments follow: residues 67 to 87, 91 to 111, 152 to 172, 192 to 212, 221 to 241, 262 to 282, 317 to 337, 364 to 384, 423 to 443, 445 to 465, 500 to 520, and 531 to 551; these read LGGS…AVVL, IAAI…IGFP, LTVV…TAIL, VTTQ…PVLY, LMIG…IWSL, SLGF…SIAL, VFGQ…FGCL, AAAV…NVVD, GCYV…LASA, TFVS…GIHI, GVLP…HSIN, and HLYA…HTLV. The segment at 583 to 607 is disordered; the sequence is NKDSTEEDSDRSLRRESREVVETKV. Over residues 592–607 the composition is skewed to basic and acidic residues; sequence DRSLRRESREVVETKV.

It belongs to the purine-cytosine permease (2.A.39) family.

It localises to the membrane. Transporter; part of the gene cluster that mediates the biosynthesis of aspirochlorine (or antibiotic A30641), an unusual halogenated spiro compound with distinctive antifungal properties due to selective inhibition of protein biosynthesis, and which is also active against bacteria, viruses, and murine tumor cells. This Aspergillus oryzae (strain ATCC 42149 / RIB 40) (Yellow koji mold) protein is Transporter aclS.